A 92-amino-acid polypeptide reads, in one-letter code: Acyl-CoA-binding protein (92 aa).

One can recognise an ACB domain in the interval 3-88; sequence LKEDFEEHAE…VKQLLEAEAS (86 aa). An acyl-CoA is bound by residues 30–34, Lys-56, and Tyr-75; that span reads YGLYK.

It belongs to the ACBP family.

In terms of biological role, binds medium- and long-chain acyl-CoA esters with very high affinity and may function as an intracellular carrier of acyl-CoA esters. In Brassica napus (Rape), this protein is Acyl-CoA-binding protein.